Reading from the N-terminus, the 489-residue chain is Rhamnulokinase (489 aa).

Residue 13-17 participates in ATP binding; that stretch reads ASSGR. C68 and C222 are disulfide-bonded. Substrate-binding positions include G83 and 236 to 238; that span reads HDT. The active-site Proton acceptor is the D237. Residue T259 participates in ATP binding. N296 is a binding site for substrate. Position 304 (Q304) interacts with ATP. Cysteines 353 and 370 form a disulfide. G402 provides a ligand contact to ATP. The cysteines at positions 413 and 417 are disulfide-linked.

Belongs to the rhamnulokinase family. Mg(2+) is required as a cofactor.

The catalysed reaction is L-rhamnulose + ATP = L-rhamnulose 1-phosphate + ADP + H(+). It participates in carbohydrate degradation; L-rhamnose degradation; glycerone phosphate from L-rhamnose: step 2/3. Its function is as follows. Involved in the catabolism of L-rhamnose (6-deoxy-L-mannose). Catalyzes the transfer of the gamma-phosphate group from ATP to the 1-hydroxyl group of L-rhamnulose to yield L-rhamnulose 1-phosphate. The chain is Rhamnulokinase from Salmonella dublin (strain CT_02021853).